The sequence spans 227 residues: Cytidylate kinase (227 aa).

Gly-12–Thr-20 serves as a coordination point for ATP.

It belongs to the cytidylate kinase family. Type 1 subfamily.

It localises to the cytoplasm. It carries out the reaction CMP + ATP = CDP + ADP. The enzyme catalyses dCMP + ATP = dCDP + ADP. The polypeptide is Cytidylate kinase (Xanthomonas oryzae pv. oryzae (strain PXO99A)).